A 254-amino-acid chain; its full sequence is 3-deoxy-manno-octulosonate cytidylyltransferase (254 aa).

It belongs to the KdsB family.

The protein localises to the cytoplasm. It carries out the reaction 3-deoxy-alpha-D-manno-oct-2-ulosonate + CTP = CMP-3-deoxy-beta-D-manno-octulosonate + diphosphate. It participates in nucleotide-sugar biosynthesis; CMP-3-deoxy-D-manno-octulosonate biosynthesis; CMP-3-deoxy-D-manno-octulosonate from 3-deoxy-D-manno-octulosonate and CTP: step 1/1. Its pathway is bacterial outer membrane biogenesis; lipopolysaccharide biosynthesis. Its function is as follows. Activates KDO (a required 8-carbon sugar) for incorporation into bacterial lipopolysaccharide in Gram-negative bacteria. The sequence is that of 3-deoxy-manno-octulosonate cytidylyltransferase from Haemophilus influenzae (strain PittGG).